The sequence spans 130 residues: Large ribosomal subunit protein eL32 (130 aa).

Ser-40 is modified (phosphoserine).

It belongs to the eukaryotic ribosomal protein eL32 family. In terms of assembly, component of the large ribosomal subunit (LSU). Mature yeast ribosomes consist of a small (40S) and a large (60S) subunit. The 40S small subunit contains 1 molecule of ribosomal RNA (18S rRNA) and 33 different proteins (encoded by 57 genes). The large 60S subunit contains 3 rRNA molecules (25S, 5.8S and 5S rRNA) and 46 different proteins (encoded by 81 genes).

The protein localises to the cytoplasm. Component of the ribosome, a large ribonucleoprotein complex responsible for the synthesis of proteins in the cell. The small ribosomal subunit (SSU) binds messenger RNAs (mRNAs) and translates the encoded message by selecting cognate aminoacyl-transfer RNA (tRNA) molecules. The large subunit (LSU) contains the ribosomal catalytic site termed the peptidyl transferase center (PTC), which catalyzes the formation of peptide bonds, thereby polymerizing the amino acids delivered by tRNAs into a polypeptide chain. The nascent polypeptides leave the ribosome through a tunnel in the LSU and interact with protein factors that function in enzymatic processing, targeting, and the membrane insertion of nascent chains at the exit of the ribosomal tunnel. This is Large ribosomal subunit protein eL32 from Saccharomyces cerevisiae (strain ATCC 204508 / S288c) (Baker's yeast).